The sequence spans 188 residues: Elongation factor P (188 aa).

This sequence belongs to the elongation factor P family.

The protein localises to the cytoplasm. The protein operates within protein biosynthesis; polypeptide chain elongation. Involved in peptide bond synthesis. Stimulates efficient translation and peptide-bond synthesis on native or reconstituted 70S ribosomes in vitro. Probably functions indirectly by altering the affinity of the ribosome for aminoacyl-tRNA, thus increasing their reactivity as acceptors for peptidyl transferase. The chain is Elongation factor P from Bdellovibrio bacteriovorus (strain ATCC 15356 / DSM 50701 / NCIMB 9529 / HD100).